The primary structure comprises 383 residues: MYTHYLKNLVSFKSVTPNSAGAIEYIDDLLKQHSFKTEIKIFGDSKKEQVTNLYAIFGGNEPNICFVGHVDVVPAGNYEFWHNSNPFKFHEQDGKIYGRGTVDMKGAIACFLAASLNFIKNNTDFKGSISFLITSDEEGKSKHGTKEMLQYIYDQRYKIDFAVVGEPTCEKEIGDTIKIGRRGSVNFKLNIVGLAGHVAYPHKANNPLPCLIKILNELINIKLDEGTEFFQNSNLEVTNIDVDNDTSNTIPASAAAHFNIRFNSLHNVETLRQLIEQIIKQYCKEYKVDYKLEYSSSAESFIQNPNDNDKIKKFANVIERTLKIKSKFSTSGGTSDARFVKDYCSLVEFGLLSDMAHKINEYTKISDLQKLYNVYYNFLIEIL.

H69 contacts Zn(2+). D71 is an active-site residue. D103 lines the Zn(2+) pocket. Catalysis depends on E137, which acts as the Proton acceptor. Residues E138, E166, and H357 each coordinate Zn(2+).

It belongs to the peptidase M20A family. DapE subfamily. In terms of assembly, homodimer. Zn(2+) is required as a cofactor. The cofactor is Co(2+).

The enzyme catalyses N-succinyl-(2S,6S)-2,6-diaminopimelate + H2O = (2S,6S)-2,6-diaminopimelate + succinate. The protein operates within amino-acid biosynthesis; L-lysine biosynthesis via DAP pathway; LL-2,6-diaminopimelate from (S)-tetrahydrodipicolinate (succinylase route): step 3/3. Catalyzes the hydrolysis of N-succinyl-L,L-diaminopimelic acid (SDAP), forming succinate and LL-2,6-diaminopimelate (DAP), an intermediate involved in the bacterial biosynthesis of lysine and meso-diaminopimelic acid, an essential component of bacterial cell walls. The chain is Succinyl-diaminopimelate desuccinylase from Rickettsia prowazekii (strain Madrid E).